Here is a 590-residue protein sequence, read N- to C-terminus: Phosphomethylpyrimidine synthase (590 aa).

Substrate-binding positions include asparagine 197, methionine 226, tyrosine 255, histidine 291, 311–313 (SRG), 352–355 (DGLR), and glutamate 391. Histidine 395 is a binding site for Zn(2+). Tyrosine 418 serves as a coordination point for substrate. Position 459 (histidine 459) interacts with Zn(2+). [4Fe-4S] cluster-binding residues include cysteine 539, cysteine 542, and cysteine 547.

This sequence belongs to the ThiC family. The cofactor is [4Fe-4S] cluster.

It carries out the reaction 5-amino-1-(5-phospho-beta-D-ribosyl)imidazole + S-adenosyl-L-methionine = 4-amino-2-methyl-5-(phosphooxymethyl)pyrimidine + CO + 5'-deoxyadenosine + formate + L-methionine + 3 H(+). Its pathway is cofactor biosynthesis; thiamine diphosphate biosynthesis. Its function is as follows. Catalyzes the synthesis of the hydroxymethylpyrimidine phosphate (HMP-P) moiety of thiamine from aminoimidazole ribotide (AIR) in a radical S-adenosyl-L-methionine (SAM)-dependent reaction. This is Phosphomethylpyrimidine synthase from Bacillus subtilis (strain 168).